A 72-amino-acid chain; its full sequence is Translation initiation factor IF-1 (72 aa).

The S1-like domain maps to 1–72 (MPKEEVLEFP…TKGRITYRFK (72 aa)).

The protein belongs to the IF-1 family. In terms of assembly, component of the 30S ribosomal translation pre-initiation complex which assembles on the 30S ribosome in the order IF-2 and IF-3, IF-1 and N-formylmethionyl-tRNA(fMet); mRNA recruitment can occur at any time during PIC assembly.

It localises to the cytoplasm. In terms of biological role, one of the essential components for the initiation of protein synthesis. Stabilizes the binding of IF-2 and IF-3 on the 30S subunit to which N-formylmethionyl-tRNA(fMet) subsequently binds. Helps modulate mRNA selection, yielding the 30S pre-initiation complex (PIC). Upon addition of the 50S ribosomal subunit IF-1, IF-2 and IF-3 are released leaving the mature 70S translation initiation complex. The polypeptide is Translation initiation factor IF-1 (Rhizobium etli (strain ATCC 51251 / DSM 11541 / JCM 21823 / NBRC 15573 / CFN 42)).